We begin with the raw amino-acid sequence, 503 residues long: uncharacterized protein (503 aa).

2 disordered regions span residues 1 to 26 (MADD…SPTT) and 132 to 156 (DQQQ…DNSM). Positions 16–26 (AQSSVPTSPTT) are enriched in low complexity. The span at 147-156 (TPNSVDDNSM) shows a compositional bias: polar residues.

This is an uncharacterized protein from Caenorhabditis elegans.